Reading from the N-terminus, the 456-residue chain is Bifunctional protein GlmU (456 aa).

Residues 1–229 (MSNSSMSVVI…LSEVEGVNNR (229 aa)) form a pyrophosphorylase region. UDP-N-acetyl-alpha-D-glucosamine contacts are provided by residues 11–14 (LAAG), lysine 25, glutamine 76, 81–82 (GT), 103–105 (YGD), glycine 140, glutamate 154, asparagine 169, and asparagine 227. Aspartate 105 lines the Mg(2+) pocket. Asparagine 227 is a Mg(2+) binding site. The tract at residues 230-250 (LQLAALERVYQSEQAEKLLLA) is linker. The interval 251-456 (GVMLLDPARF…QGWQRPIKKK (206 aa)) is N-acetyltransferase. UDP-N-acetyl-alpha-D-glucosamine is bound by residues arginine 333 and lysine 351. Histidine 363 functions as the Proton acceptor in the catalytic mechanism. UDP-N-acetyl-alpha-D-glucosamine-binding residues include tyrosine 366 and asparagine 377. Acetyl-CoA-binding positions include alanine 380, 386-387 (NY), serine 405, alanine 423, and arginine 440.

The protein in the N-terminal section; belongs to the N-acetylglucosamine-1-phosphate uridyltransferase family. This sequence in the C-terminal section; belongs to the transferase hexapeptide repeat family. As to quaternary structure, homotrimer. Requires Mg(2+) as cofactor.

Its subcellular location is the cytoplasm. It catalyses the reaction alpha-D-glucosamine 1-phosphate + acetyl-CoA = N-acetyl-alpha-D-glucosamine 1-phosphate + CoA + H(+). It carries out the reaction N-acetyl-alpha-D-glucosamine 1-phosphate + UTP + H(+) = UDP-N-acetyl-alpha-D-glucosamine + diphosphate. It participates in nucleotide-sugar biosynthesis; UDP-N-acetyl-alpha-D-glucosamine biosynthesis; N-acetyl-alpha-D-glucosamine 1-phosphate from alpha-D-glucosamine 6-phosphate (route II): step 2/2. It functions in the pathway nucleotide-sugar biosynthesis; UDP-N-acetyl-alpha-D-glucosamine biosynthesis; UDP-N-acetyl-alpha-D-glucosamine from N-acetyl-alpha-D-glucosamine 1-phosphate: step 1/1. The protein operates within bacterial outer membrane biogenesis; LPS lipid A biosynthesis. Catalyzes the last two sequential reactions in the de novo biosynthetic pathway for UDP-N-acetylglucosamine (UDP-GlcNAc). The C-terminal domain catalyzes the transfer of acetyl group from acetyl coenzyme A to glucosamine-1-phosphate (GlcN-1-P) to produce N-acetylglucosamine-1-phosphate (GlcNAc-1-P), which is converted into UDP-GlcNAc by the transfer of uridine 5-monophosphate (from uridine 5-triphosphate), a reaction catalyzed by the N-terminal domain. This Yersinia enterocolitica serotype O:8 / biotype 1B (strain NCTC 13174 / 8081) protein is Bifunctional protein GlmU.